We begin with the raw amino-acid sequence, 509 residues long: Aspartyl/glutamyl-tRNA(Asn/Gln) amidotransferase subunit B (509 aa).

Belongs to the GatB/GatE family. GatB subfamily. In terms of assembly, heterotrimer of A, B and C subunits.

It carries out the reaction L-glutamyl-tRNA(Gln) + L-glutamine + ATP + H2O = L-glutaminyl-tRNA(Gln) + L-glutamate + ADP + phosphate + H(+). The catalysed reaction is L-aspartyl-tRNA(Asn) + L-glutamine + ATP + H2O = L-asparaginyl-tRNA(Asn) + L-glutamate + ADP + phosphate + 2 H(+). Functionally, allows the formation of correctly charged Asn-tRNA(Asn) or Gln-tRNA(Gln) through the transamidation of misacylated Asp-tRNA(Asn) or Glu-tRNA(Gln) in organisms which lack either or both of asparaginyl-tRNA or glutaminyl-tRNA synthetases. The reaction takes place in the presence of glutamine and ATP through an activated phospho-Asp-tRNA(Asn) or phospho-Glu-tRNA(Gln). This is Aspartyl/glutamyl-tRNA(Asn/Gln) amidotransferase subunit B from Mycobacterium leprae (strain Br4923).